Here is a 307-residue protein sequence, read N- to C-terminus: Ribosomal protein L11 methyltransferase (307 aa).

4 residues coordinate S-adenosyl-L-methionine: Thr-144, Gly-165, Asp-187, and Asn-235.

It belongs to the methyltransferase superfamily. PrmA family.

The protein localises to the cytoplasm. It catalyses the reaction L-lysyl-[protein] + 3 S-adenosyl-L-methionine = N(6),N(6),N(6)-trimethyl-L-lysyl-[protein] + 3 S-adenosyl-L-homocysteine + 3 H(+). Functionally, methylates ribosomal protein L11. The sequence is that of Ribosomal protein L11 methyltransferase from Psychrobacter sp. (strain PRwf-1).